A 433-amino-acid chain; its full sequence is tRNA modification GTPase MnmE (433 aa).

Arginine 24, glutamate 86, and lysine 125 together coordinate (6S)-5-formyl-5,6,7,8-tetrahydrofolate. Positions 218 to 363 constitute a TrmE-type G domain; that stretch reads GARLALIGAP…LKEALREALL (146 aa). K(+) is bound at residue asparagine 228. GTP contacts are provided by residues 228-233, 247-253, and 272-275; these read NAGKSS, SPIPGTT, and DTAG. Position 232 (serine 232) interacts with Mg(2+). Residues serine 247, isoleucine 249, and threonine 252 each contribute to the K(+) site. Mg(2+) is bound at residue threonine 253. Lysine 433 serves as a coordination point for (6S)-5-formyl-5,6,7,8-tetrahydrofolate.

The protein belongs to the TRAFAC class TrmE-Era-EngA-EngB-Septin-like GTPase superfamily. TrmE GTPase family. As to quaternary structure, homodimer. Heterotetramer of two MnmE and two MnmG subunits. The cofactor is K(+).

Its subcellular location is the cytoplasm. Its function is as follows. Exhibits a very high intrinsic GTPase hydrolysis rate. Involved in the addition of a carboxymethylaminomethyl (cmnm) group at the wobble position (U34) of certain tRNAs, forming tRNA-cmnm(5)s(2)U34. This is tRNA modification GTPase MnmE from Thermus thermophilus (strain ATCC BAA-163 / DSM 7039 / HB27).